The sequence spans 285 residues: Polyamine aminopropyltransferase (285 aa).

The PABS domain occupies 2-237; sequence DLWFSESHTP…GYWCFGFASK (236 aa). Gln31 serves as a coordination point for S-methyl-5'-thioadenosine. Asp86 contributes to the spermidine binding site. S-methyl-5'-thioadenosine-binding positions include Glu106 and 137-138; that span reads DG. The active-site Proton acceptor is Asp155.

The protein belongs to the spermidine/spermine synthase family. In terms of assembly, homodimer or homotetramer.

It localises to the cytoplasm. The catalysed reaction is S-adenosyl 3-(methylsulfanyl)propylamine + putrescine = S-methyl-5'-thioadenosine + spermidine + H(+). It functions in the pathway amine and polyamine biosynthesis; spermidine biosynthesis; spermidine from putrescine: step 1/1. Functionally, catalyzes the irreversible transfer of a propylamine group from the amino donor S-adenosylmethioninamine (decarboxy-AdoMet) to putrescine (1,4-diaminobutane) to yield spermidine. This chain is Polyamine aminopropyltransferase, found in Streptococcus uberis (strain ATCC BAA-854 / 0140J).